Reading from the N-terminus, the 228-residue chain is 7-cyano-7-deazaguanine synthase (228 aa).

9-19 (LSGGPDSTTVL) serves as a coordination point for ATP. Residues Cys193, Cys203, Cys206, and Cys209 each coordinate Zn(2+).

Belongs to the QueC family. Requires Zn(2+) as cofactor.

The catalysed reaction is 7-carboxy-7-deazaguanine + NH4(+) + ATP = 7-cyano-7-deazaguanine + ADP + phosphate + H2O + H(+). It functions in the pathway purine metabolism; 7-cyano-7-deazaguanine biosynthesis. Functionally, catalyzes the ATP-dependent conversion of 7-carboxy-7-deazaguanine (CDG) to 7-cyano-7-deazaguanine (preQ(0)). The sequence is that of 7-cyano-7-deazaguanine synthase from Rickettsia peacockii (strain Rustic).